We begin with the raw amino-acid sequence, 567 residues long: Cytochrome P450 monooxygenase 231 (567 aa).

The chain crosses the membrane as a helical span at residues 3-23 (VSTNELAILAIVLLATGVLFY). N81 and N223 each carry an N-linked (GlcNAc...) asparagine glycan. C475 provides a ligand contact to heme.

It belongs to the cytochrome P450 family. It depends on heme as a cofactor.

Its subcellular location is the membrane. It participates in secondary metabolite biosynthesis. Functionally, cytochrome P450 monooxygenase that is able to use anthracene, carbazole, pyrene, and phenanthrene as substrates for oxidation. These multifunctional properties against a series of polycyclic aromatic hydrocarbons (PAHs) suggest that CYP231 would play important roles, at least in part, in fungal metabolic systems involved in xenobiotic detoxification. This chain is Cytochrome P450 monooxygenase 231, found in Postia placenta (strain ATCC 44394 / Madison 698-R) (Brown rot fungus).